Here is a 536-residue protein sequence, read N- to C-terminus: Chaperonin GroEL 2 (536 aa).

ATP contacts are provided by residues 29–32 (TLGP), 86–90 (DGTTT), glycine 413, 476–478 (NAA), and aspartate 492.

It belongs to the chaperonin (HSP60) family. As to quaternary structure, forms a cylinder of 14 subunits composed of two heptameric rings stacked back-to-back. Interacts with the co-chaperonin GroES.

Its subcellular location is the cytoplasm. It carries out the reaction ATP + H2O + a folded polypeptide = ADP + phosphate + an unfolded polypeptide.. Together with its co-chaperonin GroES, plays an essential role in assisting protein folding. The GroEL-GroES system forms a nano-cage that allows encapsulation of the non-native substrate proteins and provides a physical environment optimized to promote and accelerate protein folding. The chain is Chaperonin GroEL 2 from Moorella thermoacetica (strain ATCC 39073 / JCM 9320).